The chain runs to 425 residues: CDP-diacylglycerol--serine O-phosphatidyltransferase 1 (425 aa).

Positions 1-16 (MEPNGYRKERRKEQHL) are enriched in basic and acidic residues. A disordered region spans residues 1 to 23 (MEPNGYRKERRKEQHLGRMNGGG). 9 helical membrane passes run 42 to 62 (TISL…ALDP), 79 to 99 (WAMI…TVLI), 105 to 125 (IWRL…FLLF), 197 to 217 (PLLW…RHML), 227 to 247 (SIVL…MYTV), 296 to 316 (FIQV…TFFL), 321 to 341 (WIPP…LIAI), 361 to 381 (GAFC…CIKF), and 390 to 410 (MPLW…AFLL).

Belongs to the CDP-alcohol phosphatidyltransferase class-I family. Expressed in trichomes, leaf veins and root vasculature.

It is found in the endoplasmic reticulum membrane. Its subcellular location is the nucleus envelope. The enzyme catalyses a CDP-1,2-diacyl-sn-glycerol + L-serine = a 1,2-diacyl-sn-glycero-3-phospho-L-serine + CMP + H(+). Its pathway is phospholipid metabolism; phosphatidylethanolamine biosynthesis; phosphatidylethanolamine from CDP-diacylglycerol: step 1/2. Its function is as follows. Catalyzes a base-exchange reaction in which the polar head group of phosphatidylethanolamine (PE) or phosphatidylcholine (PC) is replaced by L-serine. Is essential for phosphatidylserine (PS) biosynthesis and PE seems to be the most plausible substrate. Plays an important role in microspore maturation. The polypeptide is CDP-diacylglycerol--serine O-phosphatidyltransferase 1 (PSS1) (Arabidopsis thaliana (Mouse-ear cress)).